Reading from the N-terminus, the 160-residue chain is Afimbrial adhesin AFA-III (160 aa).

The N-terminal stretch at Met1–Ala21 is a signal peptide. The receptor-binding stretch occupies residues Gly22 to Arg75.

The protein belongs to the Dr-adhesin family.

Its subcellular location is the fimbrium. Its function is as follows. Hemagglutinins of uropathogenic E.coli mediate adherence to the upper urinary tract. These adhesins bind to the Dr blood group antigen and also agglutinate human erythrocytes in the presence of D-mannose (mannose-resistant hemagglutination (MRHA)). The chain is Afimbrial adhesin AFA-III (afaE3) from Escherichia coli.